Reading from the N-terminus, the 67-residue chain is DNA-directed RNA polymerase subunit omega (67 aa).

The protein belongs to the RNA polymerase subunit omega family. In terms of assembly, the RNAP catalytic core consists of 2 alpha, 1 beta, 1 beta' and 1 omega subunit. When a sigma factor is associated with the core the holoenzyme is formed, which can initiate transcription.

It carries out the reaction RNA(n) + a ribonucleoside 5'-triphosphate = RNA(n+1) + diphosphate. Promotes RNA polymerase assembly. Latches the N- and C-terminal regions of the beta' subunit thereby facilitating its interaction with the beta and alpha subunits. The polypeptide is DNA-directed RNA polymerase subunit omega (Bordetella petrii (strain ATCC BAA-461 / DSM 12804 / CCUG 43448)).